Reading from the N-terminus, the 274-residue chain is Ribulose-phosphate 3-epimerase, chloroplastic (274 aa).

The transit peptide at 1 to 39 (MASPSSSSSLCSTFASPRAASLGRRLAFSSPRKAFRVRA) directs the protein to the chloroplast. A substrate-binding site is contributed by Ser-56. Positions 81, 83, and 114 each coordinate a divalent metal cation. The active-site Proton acceptor is Asp-83. Substrate is bound by residues His-114, 192–195 (GFGG), 225–227 (DGG), and 247–248 (GS). Asp-225 serves as a coordination point for a divalent metal cation. Catalysis depends on Asp-225, which acts as the Proton donor.

It belongs to the ribulose-phosphate 3-epimerase family. As to quaternary structure, homooctamer. It depends on Co(2+) as a cofactor. Fe(2+) is required as a cofactor. The cofactor is Mn(2+). Zn(2+) serves as cofactor.

The protein resides in the plastid. The protein localises to the chloroplast thylakoid membrane. The enzyme catalyses D-ribulose 5-phosphate = D-xylulose 5-phosphate. The protein operates within carbohydrate biosynthesis; Calvin cycle. Functionally, catalyzes the reversible epimerization of D-ribulose 5-phosphate to D-xylulose 5-phosphate. The protein is Ribulose-phosphate 3-epimerase, chloroplastic (RPE) of Oryza sativa subsp. japonica (Rice).